Reading from the N-terminus, the 305-residue chain is UDP-N-acetylenolpyruvoylglucosamine reductase (305 aa).

The region spanning 22-190 (KVGGAADFFA…LSARFRLQAG (169 aa)) is the FAD-binding PCMH-type domain. The active site involves Arg169. Ser220 serves as the catalytic Proton donor. Glu290 is an active-site residue.

The protein belongs to the MurB family. FAD serves as cofactor.

It is found in the cytoplasm. It catalyses the reaction UDP-N-acetyl-alpha-D-muramate + NADP(+) = UDP-N-acetyl-3-O-(1-carboxyvinyl)-alpha-D-glucosamine + NADPH + H(+). It participates in cell wall biogenesis; peptidoglycan biosynthesis. Cell wall formation. This Synechococcus sp. (strain RCC307) protein is UDP-N-acetylenolpyruvoylglucosamine reductase.